Here is a 517-residue protein sequence, read N- to C-terminus: Ribonuclease Y (517 aa).

The helical transmembrane segment at 1-21 (MIESLIALIAAIVGLGIGYLV) threads the bilayer. The KH domain maps to 207 to 273 (LINVINIKND…TKVIELLVED (67 aa)). The HD domain maps to 333-426 (ALAHSLEVAH…VCAADTLSAA (94 aa)).

It belongs to the RNase Y family.

The protein localises to the cell membrane. Functionally, endoribonuclease that initiates mRNA decay. This chain is Ribonuclease Y, found in Campylobacter jejuni subsp. jejuni serotype O:6 (strain 81116 / NCTC 11828).